Here is a 422-residue protein sequence, read N- to C-terminus: Lipase member M (422 aa).

The N-terminal stretch at 1–33 is a signal peptide; it reads MSEILSRVWTVSHRVEIWLLILVAYLLQRNVNS. The N-linked (GlcNAc...) asparagine glycan is linked to Asn-48. An AB hydrolase-1 domain is found at 92–392; it reads PVVLLQHGLL…EWAHVDFIWG (301 aa). The active-site Nucleophile is Ser-186. Cys-260 and Cys-269 are disulfide-bonded. Residues Asp-357 and His-386 each act as charge relay system in the active site.

The protein belongs to the AB hydrolase superfamily. Lipase family.

It localises to the secreted. In terms of biological role, plays a highly specific role in the last step of keratinocyte differentiation. May have an essential function in lipid metabolism of the most differentiated epidermal layers. This is Lipase member M (Lipm) from Mus musculus (Mouse).